A 691-amino-acid polypeptide reads, in one-letter code: Ribonuclease J (691 aa).

Residues methionine 1–aspartate 89 form a disordered region. The tract at residues methionine 1–histidine 132 is loss of region decreases protein stability, still able to interact with RhpA, but has decreased RNase activity even on ssRNA. The segment covering asparagine 10 to asparagine 19 has biased composition (low complexity). Over residues arginine 41–serine 57 the composition is skewed to basic and acidic residues. Positions histidine 58–asparagine 82 are enriched in basic residues. An N6-acetyllysine mark is found at lysine 134 and lysine 140. Zn(2+)-binding residues include histidine 208, histidine 210, aspartate 212, histidine 213, histidine 277, and aspartate 299. 3 positions are modified to N6-acetyllysine: lysine 323, lysine 337, and lysine 397. Position 500–504 (histidine 500–histidine 504) interacts with substrate. Lysine 511 bears the N6-acetyllysine mark. Histidine 526 provides a ligand contact to Zn(2+). 3 positions are modified to N6-acetyllysine: lysine 547, lysine 634, and lysine 649.

Belongs to the metallo-beta-lactamase superfamily. RNA-metabolizing metallo-beta-lactamase-like family. Bacterial RNase J subfamily. In terms of assembly, homodimer. Homotetramer; dimer of homodimers. Interacts with RNA helicase RphA, might be a member of a minimal RNA degradosome complex. Zn(2+) serves as cofactor. Acetylated on nine lysine residues. Some of the residues are acetylated by multiple different mechanisms. RimL is partially responsible for the acetylation of Lys-323, Lys-397 and Lys-649. HPB8_1270 homolog is partially responsible for the acetylation of Lys-323, Lys-397, Lys-511 and Lys-649. Acetyl-phosphate-mediated non-enzymatic acetylation pathway takes part in the acetylation of Lys-134, Lys-323, Lys-397, Lys-511 and Lys-649. Acetylation of the remaining residues Lys-140, Lys-337, Lys-547 and Lys-634 occurs by a yet undetermined mechanism. Acetylation on a number of these residues is important for growth regulation and proper cell morphology.

Its subcellular location is the cytoplasm. With respect to regulation, catalytic activity is regulated by the balance between homodimers and homotetramers, with homotetramers being the active forms of this enzyme. Acetylation allosterically regulates the homooligomerization state and hence the catalytic activity. An RNase that has 5'-3' exoribonuclease and endoribonuclease activity. Degrades 5'-monophosphorylated ssRNA and dsRNA, considerably more active on ssRNA. Association with RhpA significantly increases the dsRNase activity. Degrades RNA substrate with hairpin structures at both ends with low activity, but presence of RhpA significantly increases the activity on this substrate. Stimulates ATPase activity of RNA helicase RhpA. Involved in stabilization of mRNA but apparently not rRNA. The polypeptide is Ribonuclease J (Helicobacter pylori (strain B128)).